An 88-amino-acid chain; its full sequence is Platelet factor 4 (88 aa).

Residue threonine 7 is glycosylated (O-linked (GalNAc...) threonine). 2 cysteine pairs are disulfide-bonded: cysteine 25-cysteine 51 and cysteine 27-cysteine 67. Serine 41 is subject to Phosphoserine. 76–82 (KKILKKL) contributes to the heparin binding site.

It belongs to the intercrine alpha (chemokine CxC) family. Homotetramer. Interacts with TNFAIP6 (via Link domain). Interacts with CCR1. Interacts with CXCR3. Interacts with THBD; this interaction enhances generation of activated protein C. O-linked glycan consists of Gal-GalNAc disaccharide which is modified with sialic acid residues (microheterogeneity).

Its subcellular location is the secreted. Chemokine released during platelet aggregation that plays a role in different biological processes including hematopoiesis, cell proliferation, differentiation, and activation. Acts via different functional receptors including CCR1, CXCR3A or CXCR3B. Upon interaction with CXCR3A receptor, induces activated T-lymphocytes migration mediated via downstream Ras/extracellular signal-regulated kinase (ERK) signaling. Neutralizes the anticoagulant effect of heparin by binding more strongly to heparin than to the chondroitin-4-sulfate chains of the carrier molecule. Plays a role in the inhibition of hematopoiesis and in the maintenance of hematopoietic stem cell (HSC) quiescence. Chemotactic for neutrophils and monocytes via CCR1. Inhibits endothelial cell proliferation. In cooperation with toll-like receptor 8/TLR8, induces chromatin remodeling and activates inflammatory gene expression via the TBK1-IRF5 axis. In addition, induces myofibroblast differentiation and collagen synthesis in different precursor cells, including endothelial cells, by stimulating endothelial-to-mesenchymal transition. Interacts with thrombomodulin/THBD to enhance the activation of protein C and thus potentiates its anticoagulant activity. This Bos taurus (Bovine) protein is Platelet factor 4 (PF4).